The chain runs to 522 residues: MLDIVELSRLQFALTAMYHFLFVPLTLGMAFLLAIMETVYVLSGKQIYKDMTKFWGKLFGINFALGVATGLTMEFQFGTNWSYYSHYVGDIFGAPLAIEGLMAFFLESTFVGLFFFGWDRLGKVQHMCVTWLVALGSNLSALWILVANGWMQNPIASDFNFETMRMEMVSFSELVLNPVAQVKFVHTVASGYVTGAMFILGISAWYMLKGRDFAFAKRSFAIAASFGMAAVLSVIVLGDESGYEMGDVQKTKLAAIEAEWETQPAPAAFTLFGIPDQEEETNKFAIQIPYALGIIATRSVDTPVIGLKELMVQHEERIRNGMKAYSLLEQLRSGSTDQAVRDQFNSMKKDLGYGLLLKRYTPNVADATEAQIQQATKDSIPRVAPLYFAFRIMVACGFLLLAIIALSFWSVIRNRIGEKKWLLRAALYGIPLPWIAVEAGWFVAEYGRQPWAIGEVLPTAVANSSLTAGDLIFSMVLICGLYTLFLVAELFLMFKFARLGPSSLKTGRYHFEQSSTTTQPAR.

Met1 is modified (N-formylmethionine). Over 1–22 (MLDIVELSRLQFALTAMYHFLF) the chain is Cytoplasmic. His19 lines the heme b pocket. Residues 23–42 (VPLTLGMAFLLAIMETVYVL) traverse the membrane as a helical segment. Topologically, residues 43–94 (SGKQIYKDMTKFWGKLFGINFALGVATGLTMEFQFGTNWSYYSHYVGDIFGA) are periplasmic. A helical membrane pass occupies residues 95-114 (PLAIEGLMAFFLESTFVGLF). Residues 115-129 (FFGWDRLGKVQHMCV) are Cytoplasmic-facing. The chain crosses the membrane as a helical span at residues 130 to 149 (TWLVALGSNLSALWILVANG). Over 150–187 (WMQNPIASDFNFETMRMEMVSFSELVLNPVAQVKFVHT) the chain is Periplasmic. Heme b is bound at residue His186. A helical transmembrane segment spans residues 188–207 (VASGYVTGAMFILGISAWYM). Over 208–219 (LKGRDFAFAKRS) the chain is Cytoplasmic. A helical transmembrane segment spans residues 220–239 (FAIAASFGMAAVLSVIVLGD). Topologically, residues 240-392 (ESGYEMGDVQ…VAPLYFAFRI (153 aa)) are periplasmic. Met393 is a binding site for heme b. The helical transmembrane segment at 393–412 (MVACGFLLLAIIALSFWSVI) threads the bilayer. Topologically, residues 413-470 (RNRIGEKKWLLRAALYGIPLPWIAVEAGWFVAEYGRQPWAIGEVLPTAVANSSLTAGD) are cytoplasmic. Residues 471 to 490 (LIFSMVLICGLYTLFLVAEL) form a helical membrane-spanning segment. Topologically, residues 491–522 (FLMFKFARLGPSSLKTGRYHFEQSSTTTQPAR) are periplasmic.

Belongs to the cytochrome ubiquinol oxidase subunit 1 family. Heterodimer of subunits I and II. Heme b serves as cofactor. Requires heme d cis-diol as cofactor.

It is found in the cell inner membrane. It carries out the reaction 2 a ubiquinol + O2(in) + 4 H(+)(in) = 2 a ubiquinone + 2 H2O(in) + 4 H(+)(out). It functions in the pathway energy metabolism; oxidative phosphorylation. A terminal oxidase that produces a proton motive force by the vectorial transfer of protons across the inner membrane. It is the component of the aerobic respiratory chain of E.coli that predominates when cells are grown at low aeration. Generates a proton motive force using protons and electrons from opposite sides of the membrane to generate H(2)O, transferring 1 proton/electron. This Escherichia coli O6:H1 (strain CFT073 / ATCC 700928 / UPEC) protein is Cytochrome bd-I ubiquinol oxidase subunit 1 (cydA).